We begin with the raw amino-acid sequence, 242 residues long: Probable transcriptional regulatory protein Bmul_0984/BMULJ_02280 (242 aa).

It belongs to the TACO1 family.

It is found in the cytoplasm. The polypeptide is Probable transcriptional regulatory protein Bmul_0984/BMULJ_02280 (Burkholderia multivorans (strain ATCC 17616 / 249)).